Reading from the N-terminus, the 316-residue chain is GPI-specific phospholipase A2-like PGAP3 (316 aa).

Positions 1–19 (MFLAAAAFLLSAPASASQG) are cleaved as a signal peptide. Topologically, residues 20–97 (DKEPVYRDCV…GKWPFARFLC (78 aa)) are lumenal. N-linked (GlcNAc...) asparagine glycosylation occurs at N36. A helical transmembrane segment spans residues 98–118 (FEEPASALASLLNGLACLLML). Topologically, residues 119–131 (LRYRSAVPCQSPM) are cytoplasmic. Residues 132-152 (YHTITAFSLVSLNAWFWSTVF) traverse the membrane as a helical segment. At 153-165 (HTRDTYLTEKMDY) the chain is on the lumenal side. A helical transmembrane segment spans residues 166-186 (FCASAVILYSIYLCCVRTLGL). Residues 187–194 (RRPAISSM) are Cytoplasmic-facing. A helical transmembrane segment spans residues 195–215 (VGVLLILAFTSHVSYLTFVSF). At 216-220 (DYGYN) the chain is on the lumenal side. The chain crosses the membrane as a helical span at residues 221-241 (MAANASIGIINLLWWLCWCWL). Over 242–254 (NRRILPYWWRCGM) the chain is Cytoplasmic. A helical transmembrane segment spans residues 255-275 (VVLLLHGLALLELLDFPPLFW). Over 276-278 (VLD) the chain is Lumenal. A helical transmembrane segment spans residues 279 to 299 (AHAVWHLSTVPVHFLFYSFLI). Over 300 to 316 (DDSLHLLNTEKPGVKLD) the chain is Cytoplasmic.

It belongs to the PGAP3 family.

The protein localises to the golgi apparatus membrane. Its function is as follows. Involved in the fatty acid remodeling steps of GPI-anchor maturation where the unsaturated acyl chain at sn-2 of inositol phosphate is replaced by a saturated stearoyl chain. May catalyze the first step of the fatty acid remodeling, by removing the unsaturated acyl chain at sn-2 of inositol phosphate, generating a lyso-GPI intermediate. The fatty acid remodeling steps is critical for the integration of GPI-APs into lipid rafts. The sequence is that of GPI-specific phospholipase A2-like PGAP3 from Danio rerio (Zebrafish).